Here is a 39-residue protein sequence, read N- to C-terminus: Mu-like prophage FluMu protein com (39 aa).

It belongs to the com family.

The chain is Mu-like prophage FluMu protein com from Haemophilus influenzae (strain ATCC 51907 / DSM 11121 / KW20 / Rd).